Reading from the N-terminus, the 326-residue chain is Cyclin-dependent kinase 1 (326 aa).

One can recognise a Protein kinase domain in the interval 16–306 (FTKLEKIGEG…SKKALHHPYF (291 aa)). ATP contacts are provided by residues 22-30 (IGEGTYGVV) and Lys45. The Proton acceptor role is filled by Asp140.

Belongs to the protein kinase superfamily. CMGC Ser/Thr protein kinase family. CDC2/CDKX subfamily. As to quaternary structure, forms a stable but non-covalent complex with a regulatory subunit and with a cyclin. Interacts with cks-1.

Its subcellular location is the nucleus. It is found in the cytoplasm. The protein resides in the cytoskeleton. It localises to the microtubule organizing center. The protein localises to the centrosome. It catalyses the reaction L-seryl-[protein] + ATP = O-phospho-L-seryl-[protein] + ADP + H(+). It carries out the reaction L-threonyl-[protein] + ATP = O-phospho-L-threonyl-[protein] + ADP + H(+). The catalysed reaction is [DNA-directed RNA polymerase] + ATP = phospho-[DNA-directed RNA polymerase] + ADP + H(+). Its activity is regulated as follows. Phosphorylation both activates and inactivates the enzyme depending on the site of phosphorylation. Functionally, plays a key role in the control of the eukaryotic cell cycle. Required for entry into S-phase and mitosis. Acts as a component of the kinase complex that phosphorylates the repetitive C-terminus of RNA polymerase II. May function in concert with npp-16 to arrest prophase blastomeres in response to anoxia. The chain is Cyclin-dependent kinase 1 from Caenorhabditis briggsae.